The sequence spans 314 residues: Calcium homeostasis modulator protein 4 (314 aa).

The Cytoplasmic portion of the chain corresponds to 1-14 (MCPTLNNIVSSLQR). A helical transmembrane segment spans residues 15 to 37 (NGIFINSLIAALTIGGQQLFSSS). Residues 38–48 (TFSCPCQVGKN) are Extracellular-facing. 2 disulfides stabilise this stretch: Cys-41–Cys-131 and Cys-43–Cys-162. The chain crosses the membrane as a helical span at residues 49-71 (FYYGSAFLVIPALILLVAGFALR). At 72 to 103 (SQMWTITGEYCCSCAPPYRRISPLECKLACLR) the chain is on the cytoplasmic side. A helical membrane pass occupies residues 104–129 (FFSITGRAVIAPLTWLAVTLLTGTYY). The Extracellular segment spans residues 130–183 (ECAASEFASVDHYPMFDNVSASKREEILAGFPCCRSAPSDVILVRDEIALLHRY). A helical transmembrane segment spans residues 184 to 207 (QSQMLGWILITLATIAALVSCCVA). Topologically, residues 208–314 (KCCSPLTSLQ…DRSRGIELKP (107 aa)) are cytoplasmic.

The protein belongs to the CALHM family. In terms of assembly, oligomerizes to form decameric and undecameric channels. Two hemichannels can assemble in a tail-to-tail manner to form a gap junction. In terms of tissue distribution, placenta.

It is found in the cell membrane. In terms of biological role, may assemble to form gap junction channel-like structures involved in intercellular communication. Channel gating and ion conductance are likely regulated by membrane lipids rather than by membrane depolarization or extracellular calcium levels. In Homo sapiens (Human), this protein is Calcium homeostasis modulator protein 4.